Consider the following 130-residue polypeptide: Small ribosomal subunit protein uS11c (130 aa).

This sequence belongs to the universal ribosomal protein uS11 family. Part of the 30S ribosomal subunit.

The protein localises to the plastid. The protein resides in the chloroplast. In Spirogyra maxima (Green alga), this protein is Small ribosomal subunit protein uS11c.